We begin with the raw amino-acid sequence, 367 residues long: NADH-quinone oxidoreductase subunit D (367 aa).

It belongs to the complex I 49 kDa subunit family. NDH-1 is composed of 14 different subunits. Subunits NuoB, C, D, E, F, and G constitute the peripheral sector of the complex.

Its subcellular location is the cell membrane. It carries out the reaction a quinone + NADH + 5 H(+)(in) = a quinol + NAD(+) + 4 H(+)(out). Its function is as follows. NDH-1 shuttles electrons from NADH, via FMN and iron-sulfur (Fe-S) centers, to quinones in the respiratory chain. The immediate electron acceptor for the enzyme in this species is believed to be ubiquinone. Couples the redox reaction to proton translocation (for every two electrons transferred, four hydrogen ions are translocated across the cytoplasmic membrane), and thus conserves the redox energy in a proton gradient. The sequence is that of NADH-quinone oxidoreductase subunit D from Dehalococcoides mccartyi (strain ATCC BAA-2100 / JCM 16839 / KCTC 5957 / BAV1).